The chain runs to 38 residues: Large ribosomal subunit protein bL36 (38 aa).

The protein belongs to the bacterial ribosomal protein bL36 family.

The polypeptide is Large ribosomal subunit protein bL36 (Gemmatimonas aurantiaca (strain DSM 14586 / JCM 11422 / NBRC 100505 / T-27)).